The chain runs to 51 residues: Lantibiotic lacticin-481 (51 aa).

Positions 1–24 (MKEQNSFNLLQEVTESELDLILGA) are excised as a propeptide. Residues 33–38 (TISHEC) constitute a cross-link (beta-methyllanthionine (Thr-Cys)). 2 cross-links (lanthionine (Ser-Cys)) span residues 35–49 (SHEC…VFTC) and 42–50 (SWQFVFTCC). At Thr-48 the chain carries (Z)-2,3-didehydrobutyrine.

The protein belongs to the type A lantibiotic family. Monomer or homodimer. Post-translationally, maturation of lantibiotics involves the enzymatic conversion of Thr, and Ser into dehydrated AA and the formation of thioether bonds with cysteine. This is followed by membrane translocation and cleavage of the modified precursor. In terms of processing, it is established that the 2,3-didehydrobutyrine is the Z-isomer.

Lanthionine-containing peptide antibiotic (lantibiotic) active on Gram-positive bacteria. The bactericidal activity of lantibiotics is based on depolarization of energized bacterial cytoplasmic membranes, initiated by the formation of aqueous transmembrane pores. Lacticin 481 is a broad spectrum bacteriocin exhibiting activity against a wide range of lactic acid bacteria and C.tyrobutyricum. This Lactococcus lactis subsp. lactis (Streptococcus lactis) protein is Lantibiotic lacticin-481 (lctA).